Reading from the N-terminus, the 196-residue chain is uncharacterized protein (196 aa).

Residues 71–87 (YVKLIGTGCYVAILISG) form a helical membrane-spanning segment.

The protein localises to the membrane. This is an uncharacterized protein from Dictyostelium discoideum (Social amoeba).